A 233-amino-acid polypeptide reads, in one-letter code: Membrane steroid-binding protein 2 (233 aa).

Residues 23–43 traverse the membrane as a helical segment; it reads AFFTVLALAFAVYQVVSGFFV. Positions 70 to 167 constitute a Cytochrome b5 heme-binding domain; the sequence is EITEEELKLY…SKYVKVGTIQ (98 aa). The segment at 70–167 is steroid-binding; sequence EITEEELKLY…SKYVKVGTIQ (98 aa). Composition is skewed to basic and acidic residues over residues 169–181 and 202–224; these read KDGE…EPSE and THDE…KDVA. A disordered region spans residues 169 to 233; it reads KDGEGKESSE…ATDDDDAAKE (65 aa). Residue T225 is modified to Phosphothreonine.

It belongs to the cytochrome b5 family. MAPR subfamily.

It is found in the cell membrane. This is Membrane steroid-binding protein 2 (MSBP2) from Arabidopsis thaliana (Mouse-ear cress).